The following is a 205-amino-acid chain: LexA repressor (205 aa).

The H-T-H motif DNA-binding region spans 28 to 48 (RAEIATRLGFKSANAAEEHLK). Active-site for autocatalytic cleavage activity residues include serine 122 and lysine 159.

This sequence belongs to the peptidase S24 family. In terms of assembly, homodimer.

The catalysed reaction is Hydrolysis of Ala-|-Gly bond in repressor LexA.. Functionally, represses a number of genes involved in the response to DNA damage (SOS response), including recA and lexA. In the presence of single-stranded DNA, RecA interacts with LexA causing an autocatalytic cleavage which disrupts the DNA-binding part of LexA, leading to derepression of the SOS regulon and eventually DNA repair. This is LexA repressor from Shewanella denitrificans (strain OS217 / ATCC BAA-1090 / DSM 15013).